Consider the following 246-residue polypeptide: uncharacterized protein (246 aa).

Disordered regions lie at residues 29-54 (SLETDEPTSSSPSLSSNSDVSQENGS), 93-114 (LRRTMSQNSLEYDEEDEKEDKF), and 148-246 (PIPP…SVVI). Residues 35–49 (PTSSSPSLSSNSDVS) are compositionally biased toward low complexity. Positions 172-183 (RQQTNNIRTLHV) are enriched in polar residues. 2 stretches are compositionally biased toward low complexity: residues 190–203 (SSSSGSKTHSPSSS) and 214–225 (SKTTKNRSSNSS). Asparagine 219 carries N-linked (GlcNAc...) asparagine glycosylation. Residues 235-246 (LTPSPTFESVVI) show a composition bias toward polar residues.

This is an uncharacterized protein from Caenorhabditis elegans.